Consider the following 1341-residue polypeptide: DNA-directed RNA polymerase subunit beta (1341 aa).

Belongs to the RNA polymerase beta chain family. As to quaternary structure, the RNAP catalytic core consists of 2 alpha, 1 beta, 1 beta' and 1 omega subunit. When a sigma factor is associated with the core the holoenzyme is formed, which can initiate transcription.

It catalyses the reaction RNA(n) + a ribonucleoside 5'-triphosphate = RNA(n+1) + diphosphate. Its function is as follows. DNA-dependent RNA polymerase catalyzes the transcription of DNA into RNA using the four ribonucleoside triphosphates as substrates. The chain is DNA-directed RNA polymerase subunit beta from Vibrio cholerae serotype O1 (strain ATCC 39315 / El Tor Inaba N16961).